Reading from the N-terminus, the 289-residue chain is Elongation factor Ts (289 aa).

Positions 80–83 (TDFV) are involved in Mg(2+) ion dislocation from EF-Tu.

This sequence belongs to the EF-Ts family.

It localises to the cytoplasm. Associates with the EF-Tu.GDP complex and induces the exchange of GDP to GTP. It remains bound to the aminoacyl-tRNA.EF-Tu.GTP complex up to the GTP hydrolysis stage on the ribosome. The protein is Elongation factor Ts of Francisella tularensis subsp. holarctica (strain LVS).